Here is an 82-residue protein sequence, read N- to C-terminus: UPF0213 protein SERP0126 (82 aa).

In terms of domain architecture, GIY-YIG spans 2 to 77; sequence DKHFVYIVKC…KTYTRQQKLK (76 aa).

It belongs to the UPF0213 family.

The polypeptide is UPF0213 protein SERP0126 (Staphylococcus epidermidis (strain ATCC 35984 / DSM 28319 / BCRC 17069 / CCUG 31568 / BM 3577 / RP62A)).